Consider the following 133-residue polypeptide: Large ribosomal subunit protein uL15 (133 aa).

The disordered stretch occupies residues 1 to 64; it reads MGLENLKPAK…QPLQRRLPKI (64 aa).

Belongs to the universal ribosomal protein uL15 family. Part of the 50S ribosomal subunit.

Its function is as follows. Binds to the 23S rRNA. The protein is Large ribosomal subunit protein uL15 of Helicobacter pylori (strain J99 / ATCC 700824) (Campylobacter pylori J99).